The chain runs to 252 residues: Type III pantothenate kinase (252 aa).

6–13 (DIGNTSTA) contributes to the ATP binding site. 104–107 (GADR) is a binding site for substrate. The Proton acceptor role is filled by Asp-106. A K(+)-binding site is contributed by Asp-128. Thr-131 contributes to the ATP binding site. A substrate-binding site is contributed by Thr-183.

Belongs to the type III pantothenate kinase family. Homodimer. NH4(+) is required as a cofactor. Requires K(+) as cofactor.

The protein localises to the cytoplasm. The enzyme catalyses (R)-pantothenate + ATP = (R)-4'-phosphopantothenate + ADP + H(+). The protein operates within cofactor biosynthesis; coenzyme A biosynthesis; CoA from (R)-pantothenate: step 1/5. Functionally, catalyzes the phosphorylation of pantothenate (Pan), the first step in CoA biosynthesis. In Thermus thermophilus (strain ATCC 27634 / DSM 579 / HB8), this protein is Type III pantothenate kinase.